The primary structure comprises 304 residues: uncharacterized protein (304 aa).

The signal sequence occupies residues 1–15 (MTRPRPPLGPAMAGA). The Thioredoxin domain occupies 28–151 (NAAASTDADR…LSRWVDSLLS (124 aa)).

This is an uncharacterized protein from Mycobacterium bovis (strain ATCC BAA-935 / AF2122/97).